A 189-amino-acid polypeptide reads, in one-letter code: Elongation factor P (189 aa).

Lys-34 carries the post-translational modification N6-(3,6-diaminohexanoyl)-5-hydroxylysine.

It belongs to the elongation factor P family. Post-translationally, may be beta-lysylated on the epsilon-amino group of Lys-34 by the combined action of EpmA and EpmB, and then hydroxylated on the C5 position of the same residue by EpmC (if this protein is present). Lysylation is critical for the stimulatory effect of EF-P on peptide-bond formation. The lysylation moiety may extend toward the peptidyltransferase center and stabilize the terminal 3-CCA end of the tRNA. Hydroxylation of the C5 position on Lys-34 may allow additional potential stabilizing hydrogen-bond interactions with the P-tRNA.

Its subcellular location is the cytoplasm. It functions in the pathway protein biosynthesis; polypeptide chain elongation. In terms of biological role, involved in peptide bond synthesis. Alleviates ribosome stalling that occurs when 3 or more consecutive Pro residues or the sequence PPG is present in a protein, possibly by augmenting the peptidyl transferase activity of the ribosome. Modification of Lys-34 is required for alleviation. The chain is Elongation factor P from Baumannia cicadellinicola subsp. Homalodisca coagulata.